A 92-amino-acid chain; its full sequence is Small ribosomal subunit protein bS20 (92 aa).

A disordered region spans residues 1–22 (MANSPQSKKRARQAEARAAVNK).

Belongs to the bacterial ribosomal protein bS20 family.

Its function is as follows. Binds directly to 16S ribosomal RNA. In Cereibacter sphaeroides (strain ATCC 17029 / ATH 2.4.9) (Rhodobacter sphaeroides), this protein is Small ribosomal subunit protein bS20.